The following is a 489-amino-acid chain: Ribonuclease G (489 aa).

Positions 39–128 (GNIYKGRVSR…LTTDITLPSR (90 aa)) constitute an S1 motif domain. Residues Asp-304 and Asp-347 each coordinate Mg(2+).

This sequence belongs to the RNase E/G family. RNase G subfamily. In terms of assembly, homodimer, in equilibrium with possible higher multimers. Requires Mg(2+) as cofactor.

The protein resides in the cytoplasm. Functionally, an endonuclease that acts in the processing of the 5'-end of 16S rRNA and 23S rRNA. It prefers 5'-monophosphorylated substrates and cleaves single-stranded sites rich in A and U residues; contributes to tRNA processing and mRNA turnover. The sequence is that of Ribonuclease G (rng) from Escherichia coli O157:H7.